Here is a 293-residue protein sequence, read N- to C-terminus: uncharacterized protein (293 aa).

2 disordered regions span residues 1-23 and 52-83; these read MGWP…AQTD and ELQS…SELS. Basic and acidic residues predominate over residues 8-17; that stretch reads KPEDSKEEHG. A compositionally biased stretch (polar residues) spans 52-71; sequence ELQSYSHTSESPVETKTPTT.

This is an uncharacterized protein from Mus musculus (Mouse).